Reading from the N-terminus, the 176-residue chain is Transcription factor 21 (176 aa).

Residues 1 to 84 form a disordered region; the sequence is MSTGSISDVD…QVQRNAANAR (84 aa). Residues 31 to 44 show a composition bias toward polar residues; it reads GTSNESTEDSSNCE. The bHLH domain occupies 76–128; sequence VQRNAANARERARMRVLSKAFSRLKTTLPWVPPDTKLSKLDTLRLASSYIAHL.

In terms of assembly, efficient DNA binding requires dimerization with another bHLH protein. Expressed in the cranial paraxial mesoderm from 20 hpf and subsequently becomes restricted to the pharyngeal mesoderm that will form the muscle. Expression in the proepicardial organ is first seen at 40hpf in a cluster of cells between the myocardium and yolk. Also expressed in the developing arches. Expression begins to surround the heart by day 3 of development, and by 96 hpf, expression is restricted to the outer epicardial layer surrounding the myocardium.

It is found in the nucleus. Functionally, involved in epithelial-mesenchymal interactions in kidney and lung morphogenesis that include epithelial differentiation and branching morphogenesis. The sequence is that of Transcription factor 21 from Danio rerio (Zebrafish).